A 320-amino-acid polypeptide reads, in one-letter code: Cytochrome f (320 aa).

Positions 1–35 are cleaved as a signal peptide; that stretch reads MQTRNTFSWIREEITRSISVSLMIYIITWASISGA. Residues Y36, C56, C59, and H60 each contribute to the heme site. The helical transmembrane segment at 286-306 threads the bilayer; sequence VQGLLFFLGSVVLAQIFLVLK.

Belongs to the cytochrome f family. The 4 large subunits of the cytochrome b6-f complex are cytochrome b6, subunit IV (17 kDa polypeptide, petD), cytochrome f and the Rieske protein, while the 4 small subunits are PetG, PetL, PetM and PetN. The complex functions as a dimer. Heme is required as a cofactor.

Its subcellular location is the plastid. The protein resides in the chloroplast thylakoid membrane. Its function is as follows. Component of the cytochrome b6-f complex, which mediates electron transfer between photosystem II (PSII) and photosystem I (PSI), cyclic electron flow around PSI, and state transitions. This Capsella bursa-pastoris (Shepherd's purse) protein is Cytochrome f.